Reading from the N-terminus, the 171-residue chain is Cytochrome c oxidase subunit 4 isoform 2, mitochondrial (171 aa).

The N-terminal 28 residues, 1–28, are a transit peptide targeting the mitochondrion; the sequence is MLPRAAWSLVLRKGGGGRRGMHSSEGTT. Residues 13–32 are disordered; the sequence is KGGGGRRGMHSSEGTTRGGG. Residues 29–100 are Mitochondrial matrix-facing; that stretch reads RGGGKMSPYT…TFAEMNRRSN (72 aa). The chain crosses the membrane as a helical span at residues 101–126; it reads EWKTVMGCVFFFIGFAALVIWWQRVY. Topologically, residues 127 to 171 are mitochondrial intermembrane; the sequence is VFPPKPITLTDERKAQQLQRMLDMKVNPVQGLASRWDYEKKQWKK.

Belongs to the cytochrome c oxidase IV family. As to quaternary structure, component of the cytochrome c oxidase (complex IV, CIV), a multisubunit enzyme composed of 14 subunits. The complex is composed of a catalytic core of 3 subunits MT-CO1, MT-CO2 and MT-CO3, encoded in the mitochondrial DNA, and 11 supernumerary subunits COX4I1 (or COX4I2), COX5A, COX5B, COX6A1 (or COX6A2), COX6B1 (or COX6B2), COX6C, COX7A2 (or COX7A1), COX7B, COX7C, COX8A and NDUFA4, which are encoded in the nuclear genome. The complex exists as a monomer or a dimer and forms supercomplexes (SCs) in the inner mitochondrial membrane with NADH-ubiquinone oxidoreductase (complex I, CI) and ubiquinol-cytochrome c oxidoreductase (cytochrome b-c1 complex, complex III, CIII), resulting in different assemblies (supercomplex SCI(1)III(2)IV(1) and megacomplex MCI(2)III(2)IV(2)). In terms of tissue distribution, highly expressed in lung.

Its subcellular location is the mitochondrion inner membrane. It functions in the pathway energy metabolism; oxidative phosphorylation. Its function is as follows. Component of the cytochrome c oxidase, the last enzyme in the mitochondrial electron transport chain which drives oxidative phosphorylation. The respiratory chain contains 3 multisubunit complexes succinate dehydrogenase (complex II, CII), ubiquinol-cytochrome c oxidoreductase (cytochrome b-c1 complex, complex III, CIII) and cytochrome c oxidase (complex IV, CIV), that cooperate to transfer electrons derived from NADH and succinate to molecular oxygen, creating an electrochemical gradient over the inner membrane that drives transmembrane transport and the ATP synthase. Cytochrome c oxidase is the component of the respiratory chain that catalyzes the reduction of oxygen to water. Electrons originating from reduced cytochrome c in the intermembrane space (IMS) are transferred via the dinuclear copper A center (CU(A)) of subunit 2 and heme A of subunit 1 to the active site in subunit 1, a binuclear center (BNC) formed by heme A3 and copper B (CU(B)). The BNC reduces molecular oxygen to 2 water molecules using 4 electrons from cytochrome c in the IMS and 4 protons from the mitochondrial matrix. In Homo sapiens (Human), this protein is Cytochrome c oxidase subunit 4 isoform 2, mitochondrial.